The primary structure comprises 356 residues: Peptide chain release factor 1 (356 aa).

The residue at position 233 (Gln233) is an N5-methylglutamine.

Belongs to the prokaryotic/mitochondrial release factor family. Post-translationally, methylated by PrmC. Methylation increases the termination efficiency of RF1.

The protein localises to the cytoplasm. Its function is as follows. Peptide chain release factor 1 directs the termination of translation in response to the peptide chain termination codons UAG and UAA. This is Peptide chain release factor 1 from Endomicrobium trichonymphae.